Reading from the N-terminus, the 236-residue chain is Small ribosomal subunit protein mS41 (236 aa).

It belongs to the mitochondrion-specific ribosomal protein mS41 family. In terms of assembly, component of the mitochondrial small ribosomal subunit (mt-SSU). Mature N.crassa 74S mitochondrial ribosomes consist of a small (37S) and a large (54S) subunit. The 37S small subunit contains a 16S ribosomal RNA (16S mt-rRNA) and 32 different proteins. The 54S large subunit contains a 23S rRNA (23S mt-rRNA) and 42 different proteins.

Its subcellular location is the mitochondrion. In terms of biological role, component of the mitochondrial ribosome (mitoribosome), a dedicated translation machinery responsible for the synthesis of mitochondrial genome-encoded proteins, including at least some of the essential transmembrane subunits of the mitochondrial respiratory chain. The mitoribosomes are attached to the mitochondrial inner membrane and translation products are cotranslationally integrated into the membrane. This Neurospora crassa (strain ATCC 24698 / 74-OR23-1A / CBS 708.71 / DSM 1257 / FGSC 987) protein is Small ribosomal subunit protein mS41 (fyv4).